Reading from the N-terminus, the 443-residue chain is Glucose-6-phosphate isomerase (443 aa).

Glu-285 functions as the Proton donor in the catalytic mechanism. Residues His-306 and Lys-420 contribute to the active site.

The protein belongs to the GPI family.

The protein localises to the cytoplasm. The catalysed reaction is alpha-D-glucose 6-phosphate = beta-D-fructose 6-phosphate. Its pathway is carbohydrate biosynthesis; gluconeogenesis. It participates in carbohydrate degradation; glycolysis; D-glyceraldehyde 3-phosphate and glycerone phosphate from D-glucose: step 2/4. Its function is as follows. Catalyzes the reversible isomerization of glucose-6-phosphate to fructose-6-phosphate. This Staphylococcus aureus (strain NCTC 8325 / PS 47) protein is Glucose-6-phosphate isomerase.